The following is a 515-amino-acid chain: 2-isopropylmalate synthase (515 aa).

Residues Val-5–Val-268 enclose the Pyruvate carboxyltransferase domain. Mn(2+) contacts are provided by Asp-14, His-202, His-204, and Asn-239. A regulatory domain region spans residues His-394–Pro-515.

It belongs to the alpha-IPM synthase/homocitrate synthase family. LeuA type 1 subfamily. In terms of assembly, homodimer. Mn(2+) is required as a cofactor.

It is found in the cytoplasm. The enzyme catalyses 3-methyl-2-oxobutanoate + acetyl-CoA + H2O = (2S)-2-isopropylmalate + CoA + H(+). It participates in amino-acid biosynthesis; L-leucine biosynthesis; L-leucine from 3-methyl-2-oxobutanoate: step 1/4. Its function is as follows. Catalyzes the condensation of the acetyl group of acetyl-CoA with 3-methyl-2-oxobutanoate (2-ketoisovalerate) to form 3-carboxy-3-hydroxy-4-methylpentanoate (2-isopropylmalate). The chain is 2-isopropylmalate synthase from Polynucleobacter asymbioticus (strain DSM 18221 / CIP 109841 / QLW-P1DMWA-1) (Polynucleobacter necessarius subsp. asymbioticus).